Reading from the N-terminus, the 418-residue chain is Glutamyl-tRNA reductase (418 aa).

Substrate contacts are provided by residues 57 to 60 (TCNR), Ser113, 118 to 120 (DFE), and Gln124. The active-site Nucleophile is Cys58. An NADP(+)-binding site is contributed by 193–198 (GTGKIG).

This sequence belongs to the glutamyl-tRNA reductase family. In terms of assembly, homodimer.

It catalyses the reaction (S)-4-amino-5-oxopentanoate + tRNA(Glu) + NADP(+) = L-glutamyl-tRNA(Glu) + NADPH + H(+). The protein operates within porphyrin-containing compound metabolism; protoporphyrin-IX biosynthesis; 5-aminolevulinate from L-glutamyl-tRNA(Glu): step 1/2. Its function is as follows. Catalyzes the NADPH-dependent reduction of glutamyl-tRNA(Glu) to glutamate 1-semialdehyde (GSA). The polypeptide is Glutamyl-tRNA reductase (Christiangramia forsetii (strain DSM 17595 / CGMCC 1.15422 / KT0803) (Gramella forsetii)).